Here is a 388-residue protein sequence, read N- to C-terminus: Carbamoyl phosphate synthase small chain (388 aa).

Positions 1–194 (MAQNPLSKPT…WPEGYARQEA (194 aa)) are CPSase. Positions 53, 246, and 248 each coordinate L-glutamine. Residues 198-387 (KVVAIDYGAK…AAAMDAQKAE (190 aa)) form the Glutamine amidotransferase type-1 domain. Catalysis depends on cysteine 276, which acts as the Nucleophile. L-glutamine contacts are provided by leucine 277, glutamine 280, asparagine 318, glycine 320, and phenylalanine 321. Active-site residues include histidine 360 and glutamate 362.

Belongs to the CarA family. Composed of two chains; the small (or glutamine) chain promotes the hydrolysis of glutamine to ammonia, which is used by the large (or ammonia) chain to synthesize carbamoyl phosphate. Tetramer of heterodimers (alpha,beta)4.

The enzyme catalyses hydrogencarbonate + L-glutamine + 2 ATP + H2O = carbamoyl phosphate + L-glutamate + 2 ADP + phosphate + 2 H(+). It catalyses the reaction L-glutamine + H2O = L-glutamate + NH4(+). It participates in amino-acid biosynthesis; L-arginine biosynthesis; carbamoyl phosphate from bicarbonate: step 1/1. Its pathway is pyrimidine metabolism; UMP biosynthesis via de novo pathway; (S)-dihydroorotate from bicarbonate: step 1/3. Its function is as follows. Small subunit of the glutamine-dependent carbamoyl phosphate synthetase (CPSase). CPSase catalyzes the formation of carbamoyl phosphate from the ammonia moiety of glutamine, carbonate, and phosphate donated by ATP, constituting the first step of 2 biosynthetic pathways, one leading to arginine and/or urea and the other to pyrimidine nucleotides. The small subunit (glutamine amidotransferase) binds and cleaves glutamine to supply the large subunit with the substrate ammonia. This Ruegeria pomeroyi (strain ATCC 700808 / DSM 15171 / DSS-3) (Silicibacter pomeroyi) protein is Carbamoyl phosphate synthase small chain.